A 453-amino-acid chain; its full sequence is Kynureninase (453 aa).

Pyridoxal 5'-phosphate contacts are provided by residues L111, T112, 139–142 (FPSD), S196, D226, H229, and Y251. The residue at position 252 (K252) is an N6-(pyridoxal phosphate)lysine. Pyridoxal 5'-phosphate contacts are provided by W286 and N314.

This sequence belongs to the kynureninase family. In terms of assembly, homodimer. It depends on pyridoxal 5'-phosphate as a cofactor.

Its subcellular location is the cytoplasm. It localises to the nucleus. The catalysed reaction is L-kynurenine + H2O = anthranilate + L-alanine + H(+). It catalyses the reaction 3-hydroxy-L-kynurenine + H2O = 3-hydroxyanthranilate + L-alanine + H(+). It participates in amino-acid degradation; L-kynurenine degradation; L-alanine and anthranilate from L-kynurenine: step 1/1. Its pathway is cofactor biosynthesis; NAD(+) biosynthesis; quinolinate from L-kynurenine: step 2/3. Its function is as follows. Catalyzes the cleavage of L-kynurenine (L-Kyn) and L-3-hydroxykynurenine (L-3OHKyn) into anthranilic acid (AA) and 3-hydroxyanthranilic acid (3-OHAA), respectively. The protein is Kynureninase of Saccharomyces cerevisiae (strain ATCC 204508 / S288c) (Baker's yeast).